Here is a 157-residue protein sequence, read N- to C-terminus: Protein NrdI (157 aa).

It belongs to the NrdI family.

Probably involved in ribonucleotide reductase function. The chain is Protein NrdI from Mycoplasma mycoides subsp. mycoides SC (strain CCUG 32753 / NCTC 10114 / PG1).